A 308-amino-acid polypeptide reads, in one-letter code: Transaldolase (308 aa).

Catalysis depends on K125, which acts as the Schiff-base intermediate with substrate.

This sequence belongs to the transaldolase family. Type 1 subfamily. Homodimer.

The protein resides in the cytoplasm. It catalyses the reaction D-sedoheptulose 7-phosphate + D-glyceraldehyde 3-phosphate = D-erythrose 4-phosphate + beta-D-fructose 6-phosphate. Its pathway is carbohydrate degradation; pentose phosphate pathway; D-glyceraldehyde 3-phosphate and beta-D-fructose 6-phosphate from D-ribose 5-phosphate and D-xylulose 5-phosphate (non-oxidative stage): step 2/3. Its function is as follows. Transaldolase is important for the balance of metabolites in the pentose-phosphate pathway. The chain is Transaldolase from Pseudomonas entomophila (strain L48).